The following is a 380-amino-acid chain: Cytochrome b (380 aa).

A run of 4 helical transmembrane segments spans residues 33 to 53 (FGSL…FLAM), 77 to 98 (WLLR…YLHI), 113 to 133 (WNIG…GYVL), and 178 to 198 (FFTF…LHLL). Positions 83 and 97 each coordinate heme b. Positions 182 and 196 each coordinate heme b. Residue His201 coordinates a ubiquinone. The next 4 helical transmembrane spans lie at 226-246 (YKDL…ALLN), 288-308 (LGGV…PVLH), 320-340 (PSQT…WIGG), and 347-367 (FIII…ILIP).

The protein belongs to the cytochrome b family. As to quaternary structure, the cytochrome bc1 complex contains 3 respiratory subunits (MT-CYB, CYC1 and UQCRFS1), 2 core proteins (UQCRC1 and UQCRC2) and probably 6 low-molecular weight proteins. It depends on heme b as a cofactor.

The protein localises to the mitochondrion inner membrane. Component of the ubiquinol-cytochrome c reductase complex (complex III or cytochrome b-c1 complex) that is part of the mitochondrial respiratory chain. The b-c1 complex mediates electron transfer from ubiquinol to cytochrome c. Contributes to the generation of a proton gradient across the mitochondrial membrane that is then used for ATP synthesis. The polypeptide is Cytochrome b (mt-cyb) (Atractosteus spatula (Alligator gar)).